The primary structure comprises 243 residues: Phosphoribosylaminoimidazole-succinocarboxamide synthase (243 aa).

Belongs to the SAICAR synthetase family.

It carries out the reaction 5-amino-1-(5-phospho-D-ribosyl)imidazole-4-carboxylate + L-aspartate + ATP = (2S)-2-[5-amino-1-(5-phospho-beta-D-ribosyl)imidazole-4-carboxamido]succinate + ADP + phosphate + 2 H(+). Its pathway is purine metabolism; IMP biosynthesis via de novo pathway; 5-amino-1-(5-phospho-D-ribosyl)imidazole-4-carboxamide from 5-amino-1-(5-phospho-D-ribosyl)imidazole-4-carboxylate: step 1/2. The sequence is that of Phosphoribosylaminoimidazole-succinocarboxamide synthase from Thermosynechococcus vestitus (strain NIES-2133 / IAM M-273 / BP-1).